The primary structure comprises 137 residues: Small ribosomal subunit protein uS8 (137 aa).

It belongs to the universal ribosomal protein uS8 family. Part of the 30S ribosomal subunit. Contacts proteins S5 and S12.

In terms of biological role, one of the primary rRNA binding proteins, it binds directly to 16S rRNA central domain where it helps coordinate assembly of the platform of the 30S subunit. This Metamycoplasma arthritidis (strain 158L3-1) (Mycoplasma arthritidis) protein is Small ribosomal subunit protein uS8.